The primary structure comprises 374 residues: Tetraacyldisaccharide 4'-kinase (374 aa).

Thr-59–Thr-66 lines the ATP pocket.

Belongs to the LpxK family.

It carries out the reaction a lipid A disaccharide + ATP = a lipid IVA + ADP + H(+). Its pathway is glycolipid biosynthesis; lipid IV(A) biosynthesis; lipid IV(A) from (3R)-3-hydroxytetradecanoyl-[acyl-carrier-protein] and UDP-N-acetyl-alpha-D-glucosamine: step 6/6. Its function is as follows. Transfers the gamma-phosphate of ATP to the 4'-position of a tetraacyldisaccharide 1-phosphate intermediate (termed DS-1-P) to form tetraacyldisaccharide 1,4'-bis-phosphate (lipid IVA). The chain is Tetraacyldisaccharide 4'-kinase from Elusimicrobium minutum (strain Pei191).